Reading from the N-terminus, the 354-residue chain is Adenine deaminase (354 aa).

H19, H21, and H211 together coordinate Zn(2+). Catalysis depends on E214, which acts as the Proton donor. Residue D291 coordinates Zn(2+). Position 292 (D292) interacts with substrate.

The protein belongs to the metallo-dependent hydrolases superfamily. Adenosine and AMP deaminases family. Adenine deaminase type 2 subfamily. Requires Zn(2+) as cofactor.

It is found in the cytoplasm. The protein localises to the nucleus. It carries out the reaction adenine + H2O + H(+) = hypoxanthine + NH4(+). Functionally, catalyzes the hydrolytic deamination of adenine to hypoxanthine. Plays an important role in the purine salvage pathway and in nitrogen catabolism. The polypeptide is Adenine deaminase (aah1) (Aspergillus fumigatus (strain ATCC MYA-4609 / CBS 101355 / FGSC A1100 / Af293) (Neosartorya fumigata)).